Reading from the N-terminus, the 132-residue chain is Small ribosomal subunit protein uS8 (132 aa).

Belongs to the universal ribosomal protein uS8 family. In terms of assembly, part of the 30S ribosomal subunit. Contacts proteins S5 and S12.

Its function is as follows. One of the primary rRNA binding proteins, it binds directly to 16S rRNA central domain where it helps coordinate assembly of the platform of the 30S subunit. The sequence is that of Small ribosomal subunit protein uS8 from Christiangramia forsetii (strain DSM 17595 / CGMCC 1.15422 / KT0803) (Gramella forsetii).